Here is a 361-residue protein sequence, read N- to C-terminus: Probable lipid desaturase ADS3.2, chloroplastic (361 aa).

A chloroplast-targeting transit peptide spans Met-1–Val-57. The next 2 helical transmembrane spans lie at Leu-99 to Trp-118 and Trp-122 to Tyr-139. The Histidine box-1 signature appears at His-140–His-145. The short motif at His-177–His-181 is the Histidine box-2 element. Residues Phe-246–Ala-266 form a helical membrane-spanning segment. The Histidine box-3 motif lies at His-309–His-313.

This sequence belongs to the fatty acid desaturase type 1 family. Requires Fe(2+) as cofactor.

The protein localises to the plastid. It is found in the chloroplast membrane. The protein operates within lipid metabolism; polyunsaturated fatty acid biosynthesis. In Arabidopsis thaliana (Mouse-ear cress), this protein is Probable lipid desaturase ADS3.2, chloroplastic.